A 66-amino-acid polypeptide reads, in one-letter code: Toxin Boma6a (66 aa).

One can recognise an LCN-type CS-alpha/beta domain in the interval arginine 2–histidine 64. 4 disulfide bridges follow: cysteine 12–cysteine 63, cysteine 16–cysteine 36, cysteine 22–cysteine 46, and cysteine 26–cysteine 48.

Belongs to the long (4 C-C) scorpion toxin superfamily. Sodium channel inhibitor family. Alpha subfamily. Expressed by the venom gland.

The protein localises to the secreted. Alpha toxins bind voltage-independently at site-3 of sodium channels (Nav) and inhibit the inactivation of the activated channels, thereby blocking neuronal transmission. This chain is Toxin Boma6a, found in Buthus occitanus mardochei (Moroccan scorpion).